The following is a 493-amino-acid chain: Glutamyl-tRNA(Gln) amidotransferase subunit A (493 aa).

Active-site charge relay system residues include Lys79 and Ser159. The Acyl-ester intermediate role is filled by Ser183.

The protein belongs to the amidase family. GatA subfamily. Heterotrimer of A, B and C subunits.

The enzyme catalyses L-glutamyl-tRNA(Gln) + L-glutamine + ATP + H2O = L-glutaminyl-tRNA(Gln) + L-glutamate + ADP + phosphate + H(+). In terms of biological role, allows the formation of correctly charged Gln-tRNA(Gln) through the transamidation of misacylated Glu-tRNA(Gln) in organisms which lack glutaminyl-tRNA synthetase. The reaction takes place in the presence of glutamine and ATP through an activated gamma-phospho-Glu-tRNA(Gln). The sequence is that of Glutamyl-tRNA(Gln) amidotransferase subunit A from Sinorhizobium fredii (strain NBRC 101917 / NGR234).